A 442-amino-acid chain; its full sequence is tRNA-2-methylthio-N(6)-dimethylallyladenosine synthase (442 aa).

The region spanning 3-118 (KKVFIKTFGC…LPELLNARAA (116 aa)) is the MTTase N-terminal domain. Cysteine 12, cysteine 49, cysteine 81, cysteine 155, cysteine 159, and cysteine 162 together coordinate [4Fe-4S] cluster. The 234-residue stretch at 141–374 (RVEGSSAFVS…QAVINNNIKD (234 aa)) folds into the Radical SAM core domain. Positions 377–440 (DERVGTVQRL…TFTLRGEVVV (64 aa)) constitute a TRAM domain.

Belongs to the methylthiotransferase family. MiaB subfamily. In terms of assembly, monomer. Requires [4Fe-4S] cluster as cofactor.

It is found in the cytoplasm. It carries out the reaction N(6)-dimethylallyladenosine(37) in tRNA + (sulfur carrier)-SH + AH2 + 2 S-adenosyl-L-methionine = 2-methylsulfanyl-N(6)-dimethylallyladenosine(37) in tRNA + (sulfur carrier)-H + 5'-deoxyadenosine + L-methionine + A + S-adenosyl-L-homocysteine + 2 H(+). Functionally, catalyzes the methylthiolation of N6-(dimethylallyl)adenosine (i(6)A), leading to the formation of 2-methylthio-N6-(dimethylallyl)adenosine (ms(2)i(6)A) at position 37 in tRNAs that read codons beginning with uridine. The polypeptide is tRNA-2-methylthio-N(6)-dimethylallyladenosine synthase (Delftia acidovorans (strain DSM 14801 / SPH-1)).